The sequence spans 355 residues: Methylthioribose-1-phosphate isomerase (355 aa).

Substrate is bound by residues 47–49 (RGA), arginine 90, and glutamine 197. The Proton donor role is filled by aspartate 238. 248–249 (NK) provides a ligand contact to substrate.

Belongs to the eIF-2B alpha/beta/delta subunits family. MtnA subfamily.

It carries out the reaction 5-(methylsulfanyl)-alpha-D-ribose 1-phosphate = 5-(methylsulfanyl)-D-ribulose 1-phosphate. The protein operates within amino-acid biosynthesis; L-methionine biosynthesis via salvage pathway; L-methionine from S-methyl-5-thio-alpha-D-ribose 1-phosphate: step 1/6. Functionally, catalyzes the interconversion of methylthioribose-1-phosphate (MTR-1-P) into methylthioribulose-1-phosphate (MTRu-1-P). This Herpetosiphon aurantiacus (strain ATCC 23779 / DSM 785 / 114-95) protein is Methylthioribose-1-phosphate isomerase.